The sequence spans 195 residues: HTH-type transcriptional regulator BetI (195 aa).

The HTH tetR-type domain maps to 8–68 (SIRRRQLIDA…ATMRDITSQL (61 aa)). Positions 31-50 (TIAQIARRAGVSTGIISHYF) form a DNA-binding region, H-T-H motif.

The protein operates within amine and polyamine biosynthesis; betaine biosynthesis via choline pathway [regulation]. Its function is as follows. Repressor involved in the biosynthesis of the osmoprotectant glycine betaine. It represses transcription of the choline transporter BetT and the genes of BetAB involved in the synthesis of glycine betaine. The sequence is that of HTH-type transcriptional regulator BetI from Escherichia coli O157:H7.